A 233-amino-acid chain; its full sequence is Lipoprotein-releasing system ATP-binding protein LolD (233 aa).

The ABC transporter domain maps to 6–233 (LQCDNLCKRY…TAELSLMGAE (228 aa)). 42–49 (GSSGSGKS) is a binding site for ATP.

The protein belongs to the ABC transporter superfamily. Lipoprotein translocase (TC 3.A.1.125) family. As to quaternary structure, the complex is composed of two ATP-binding proteins (LolD) and two transmembrane proteins (LolC and LolE).

Its subcellular location is the cell inner membrane. In terms of biological role, part of the ABC transporter complex LolCDE involved in the translocation of mature outer membrane-directed lipoproteins, from the inner membrane to the periplasmic chaperone, LolA. Responsible for the formation of the LolA-lipoprotein complex in an ATP-dependent manner. This Salmonella paratyphi A (strain ATCC 9150 / SARB42) protein is Lipoprotein-releasing system ATP-binding protein LolD.